A 90-amino-acid chain; its full sequence is Protein LURE 1.4 (90 aa).

Positions 1-19 (MKCPSIFLTLLIFVSSCTS) are cleaved as a signal peptide. N-linked (GlcNAc...) asparagine glycosylation is present at Asn-23. 3 cysteine pairs are disulfide-bonded: Cys-58–Cys-75, Cys-61–Cys-82, and Cys-65–Cys-84. Residues 67–87 (RRGKYIRTCSFERKLCRCSIS) form a PRK6 binding region.

It belongs to the DEFL family. As to quaternary structure, binds to PRK6 LRRs. In terms of tissue distribution, expressed in the pistil. Detected exclusively in the synergid cells.

It localises to the secreted. Its function is as follows. Pollen tube attractants guiding pollen tubes to the ovular micropyle. This is Protein LURE 1.4 from Arabidopsis thaliana (Mouse-ear cress).